Reading from the N-terminus, the 164-residue chain is Probable calcium-binding protein CML17 (164 aa).

4 consecutive EF-hand domains span residues 4–39 (DQQA…LGMP), 40–75 (VHRE…VMRV), 88–123 (VDEA…LGIK), and 126–161 (RTAE…GAFA). Residues D17, D19, D21, R23, E28, D53, N55, D57, C59, E64, D101, N103, D105, E112, D139, D141, D143, R145, and E150 each coordinate Ca(2+).

Potential calcium sensor. The polypeptide is Probable calcium-binding protein CML17 (CML17) (Oryza sativa subsp. japonica (Rice)).